A 624-amino-acid polypeptide reads, in one-letter code: Phosphomethylpyrimidine synthase (624 aa).

Residues N231, M260, Y289, H325, 345 to 347, 386 to 389, and E425 each bind substrate; these read SRG and DGLR. Zn(2+) is bound at residue H429. Y452 is a substrate binding site. H493 is a Zn(2+) binding site. [4Fe-4S] cluster-binding residues include C573, C576, and C581.

It belongs to the ThiC family. In terms of assembly, homodimer. The cofactor is [4Fe-4S] cluster.

It carries out the reaction 5-amino-1-(5-phospho-beta-D-ribosyl)imidazole + S-adenosyl-L-methionine = 4-amino-2-methyl-5-(phosphooxymethyl)pyrimidine + CO + 5'-deoxyadenosine + formate + L-methionine + 3 H(+). The protein operates within cofactor biosynthesis; thiamine diphosphate biosynthesis. In terms of biological role, catalyzes the synthesis of the hydroxymethylpyrimidine phosphate (HMP-P) moiety of thiamine from aminoimidazole ribotide (AIR) in a radical S-adenosyl-L-methionine (SAM)-dependent reaction. The chain is Phosphomethylpyrimidine synthase from Myxococcus xanthus (strain DK1622).